Here is a 368-residue protein sequence, read N- to C-terminus: Membrane glycoprotein UL18 (368 aa).

A signal peptide spans 1 to 19 (MMTMWCLTLFVLWMLRVVG). The chain crosses the membrane as a helical span at residues 326-346 (ISSVLLALLLCALLFAFLHYF).

Interacts with host LILRB1.

It is found in the host membrane. Functionally, plays a role in the protection against host NK cell cytotoxicity by interacting with and modulating the activity of the host inhibitory leukocyte Ig-like receptor 1/LILRB1, which is expressed on monocytes, dendritic cells, as well as subsets of T and NK cells. UL18 exerts an inhibitory effect on LIR-1+ NK cells, while it stimulates LIR-1- NK cell. This Homo sapiens (Human) protein is Membrane glycoprotein UL18 (UL18).